Consider the following 332-residue polypeptide: Fructose-1,6-bisphosphatase class 1 (332 aa).

4 residues coordinate Mg(2+): Glu89, Asp110, Leu112, and Asp113. Substrate-binding positions include 113–116, Asn206, Tyr239, 257–259, and Lys269; these read DGSS and YLY. Glu275 is a binding site for Mg(2+).

Belongs to the FBPase class 1 family. In terms of assembly, homotetramer. Mg(2+) is required as a cofactor.

The protein resides in the cytoplasm. It carries out the reaction beta-D-fructose 1,6-bisphosphate + H2O = beta-D-fructose 6-phosphate + phosphate. It functions in the pathway carbohydrate biosynthesis; gluconeogenesis. The sequence is that of Fructose-1,6-bisphosphatase class 1 from Klebsiella pneumoniae subsp. pneumoniae (strain ATCC 700721 / MGH 78578).